Consider the following 129-residue polypeptide: Follitropin subunit beta (129 aa).

A signal peptide spans 1 to 18 (MKSVQFCFLFCCWRVICC). 6 disulfide bridges follow: cysteine 21–cysteine 69, cysteine 35–cysteine 84, cysteine 38–cysteine 122, cysteine 46–cysteine 100, cysteine 50–cysteine 102, and cysteine 105–cysteine 112. Asparagine 25 and asparagine 42 each carry an N-linked (GlcNAc...) asparagine glycan.

It belongs to the glycoprotein hormones subunit beta family. As to quaternary structure, heterodimer. The active follitropin is a heterodimer composed of an alpha chain/CGA shared with other hormones and a unique beta chain/FSHB shown here.

It is found in the secreted. In terms of biological role, together with the alpha chain CGA constitutes follitropin, the follicle-stimulating hormone, and provides its biological specificity to the hormone heterodimer. Binds FSHR, a G protein-coupled receptor, on target cells to activate downstream signaling pathways. Follitropin is involved in follicle development and spermatogenesis in reproductive organs. The protein is Follitropin subunit beta (FSHB) of Panthera tigris altaica (Siberian tiger).